A 157-amino-acid polypeptide reads, in one-letter code: Cyclic pyranopterin monophosphate synthase (157 aa).

Residues Leu-73–His-75 and Met-110–Glu-111 contribute to the substrate site. The active site involves Asp-125.

The protein belongs to the MoaC family. In terms of assembly, homohexamer; trimer of dimers.

The catalysed reaction is (8S)-3',8-cyclo-7,8-dihydroguanosine 5'-triphosphate = cyclic pyranopterin phosphate + diphosphate. It functions in the pathway cofactor biosynthesis; molybdopterin biosynthesis. Functionally, catalyzes the conversion of (8S)-3',8-cyclo-7,8-dihydroguanosine 5'-triphosphate to cyclic pyranopterin monophosphate (cPMP). The sequence is that of Cyclic pyranopterin monophosphate synthase from Pseudomonas fluorescens (strain SBW25).